Here is a 100-residue protein sequence, read N- to C-terminus: Urease subunit gamma (100 aa).

It belongs to the urease gamma subunit family. As to quaternary structure, heterotrimer of UreA (gamma), UreB (beta) and UreC (alpha) subunits. Three heterotrimers associate to form the active enzyme.

Its subcellular location is the cytoplasm. It carries out the reaction urea + 2 H2O + H(+) = hydrogencarbonate + 2 NH4(+). It participates in nitrogen metabolism; urea degradation; CO(2) and NH(3) from urea (urease route): step 1/1. This chain is Urease subunit gamma, found in Trichormus variabilis (strain ATCC 29413 / PCC 7937) (Anabaena variabilis).